Reading from the N-terminus, the 147-residue chain is Protein MioC (147 aa).

The Flavodoxin-like domain occupies 4–143; sequence ITLISGSTLG…PAEEWLGSWV (140 aa).

It belongs to the flavodoxin family. MioC subfamily. Homodimer. It depends on FMN as a cofactor.

Functionally, probable electron transporter required for biotin synthase activity. This Escherichia coli (strain K12) protein is Protein MioC (mioC).